A 155-amino-acid chain; its full sequence is 6,7-dimethyl-8-ribityllumazine synthase (155 aa).

Residues W24, 58 to 60 (AFE), and 82 to 84 (AVI) contribute to the 5-amino-6-(D-ribitylamino)uracil site. 87–88 (GT) contacts (2S)-2-hydroxy-3-oxobutyl phosphate. H90 acts as the Proton donor in catalysis. 5-amino-6-(D-ribitylamino)uracil is bound at residue F115. R129 contacts (2S)-2-hydroxy-3-oxobutyl phosphate.

Belongs to the DMRL synthase family. In terms of assembly, forms an icosahedral capsid composed of 60 subunits, arranged as a dodecamer of pentamers.

It catalyses the reaction (2S)-2-hydroxy-3-oxobutyl phosphate + 5-amino-6-(D-ribitylamino)uracil = 6,7-dimethyl-8-(1-D-ribityl)lumazine + phosphate + 2 H2O + H(+). It functions in the pathway cofactor biosynthesis; riboflavin biosynthesis; riboflavin from 2-hydroxy-3-oxobutyl phosphate and 5-amino-6-(D-ribitylamino)uracil: step 1/2. Its function is as follows. Catalyzes the formation of 6,7-dimethyl-8-ribityllumazine by condensation of 5-amino-6-(D-ribitylamino)uracil with 3,4-dihydroxy-2-butanone 4-phosphate. This is the penultimate step in the biosynthesis of riboflavin. In Saccharophagus degradans (strain 2-40 / ATCC 43961 / DSM 17024), this protein is 6,7-dimethyl-8-ribityllumazine synthase.